Here is a 415-residue protein sequence, read N- to C-terminus: Ribulose bisphosphate carboxylase/oxygenase activase (415 aa).

37–44 is a binding site for ATP; the sequence is GRKGEGKT.

The protein belongs to the RuBisCO activase family.

In terms of biological role, activation of RuBisCO (ribulose-1,5-bisohosphate carboxylase/oxygenase; EC 4.1.1.39) involves the ATP-dependent carboxylation of the epsilon-amino group of lysine leading to a carbamate structure. This chain is Ribulose bisphosphate carboxylase/oxygenase activase (rca), found in Anabaena sp. (strain CA / ATCC 33047).